Here is a 475-residue protein sequence, read N- to C-terminus: Early growth response protein 1-B (475 aa).

Disordered regions lie at residues 109 to 180 (NVSS…TASI) and 264 to 285 (PSRM…RPYA). Positions 111 to 140 (SSSSAPSSSPSSSSSSSSSSSSQSPPLSCS) are enriched in low complexity. A compositionally biased stretch (polar residues) spans 170-179 (QPFQNASTAS). 3 C2H2-type zinc fingers span residues 284–308 (YACP…IRIH), 314–336 (FQCR…IRTH), and 342–364 (FACD…TKIH). The interval 355 to 379 (DERKRHTKIHLRQKDKKADKATPVS) is disordered. A compositionally biased stretch (basic residues) spans 359–369 (RHTKIHLRQKD).

It belongs to the EGR C2H2-type zinc-finger protein family.

It is found in the nucleus. It localises to the cytoplasm. In terms of biological role, transcriptional regulator. Recognizes and binds to the DNA sequence 5'-GCG(T/G)GGGCG-3'(EGR-site) in the promoter region of target genes. Binds double-stranded target DNA, irrespective of the cytosine methylation status. Regulates the transcription of numerous target genes, and thereby plays an important role in regulating the response to growth factors, DNA damage, and ischemia. Plays a role in the regulation of cell survival, proliferation and cell death. Mediates responses to ischemia and hypoxia; regulates the expression of proteins that are involved in inflammatory processes. Plays a role in regulating the expression of circadian clock genes. In Xenopus laevis (African clawed frog), this protein is Early growth response protein 1-B (egr1-b).